The sequence spans 431 residues: Ribonuclease TTHA0252 (431 aa).

Zn(2+) is bound by residues His59, His61, Asp63, His64, His141, Asp162, and His400.

The protein belongs to the metallo-beta-lactamase superfamily. RNA-metabolizing metallo-beta-lactamase-like family. As to quaternary structure, monomer. Requires Zn(2+) as cofactor.

It is found in the cytoplasm. Inhibited by cadmium, cobalt, manganese, magnesium, calcium and nickel ions. Has endoribonuclease activity towards 23S and 16S rRNA (in vitro). The polypeptide is Ribonuclease TTHA0252 (Thermus thermophilus (strain ATCC 27634 / DSM 579 / HB8)).